A 189-amino-acid polypeptide reads, in one-letter code: Pyridoxal 5'-phosphate synthase subunit PdxT (189 aa).

An L-glutamine-binding site is contributed by 50–52 (GES). Cys80 acts as the Nucleophile in catalysis. L-glutamine-binding positions include Arg107 and 134-135 (IR). Residues His169 and Glu171 each act as charge relay system in the active site.

It belongs to the glutaminase PdxT/SNO family. In terms of assembly, in the presence of PdxS, forms a dodecamer of heterodimers. Only shows activity in the heterodimer.

It carries out the reaction aldehydo-D-ribose 5-phosphate + D-glyceraldehyde 3-phosphate + L-glutamine = pyridoxal 5'-phosphate + L-glutamate + phosphate + 3 H2O + H(+). The catalysed reaction is L-glutamine + H2O = L-glutamate + NH4(+). The protein operates within cofactor biosynthesis; pyridoxal 5'-phosphate biosynthesis. Catalyzes the hydrolysis of glutamine to glutamate and ammonia as part of the biosynthesis of pyridoxal 5'-phosphate. The resulting ammonia molecule is channeled to the active site of PdxS. This chain is Pyridoxal 5'-phosphate synthase subunit PdxT, found in Picrophilus torridus (strain ATCC 700027 / DSM 9790 / JCM 10055 / NBRC 100828 / KAW 2/3).